A 77-amino-acid polypeptide reads, in one-letter code: Acyl carrier protein homolog (77 aa).

The Carrier domain maps to 1-76 (MSINIKDLIM…DLINAFEDVL (76 aa)). Ser-36 bears the O-(pantetheine 4'-phosphoryl)serine mark.

In terms of processing, 4'-phosphopantetheine is transferred from CoA to a specific serine of the apo-ACP-like protein.

It participates in lipid metabolism; fatty acid biosynthesis. In terms of biological role, carrier of the growing fatty acid chain in fatty acid biosynthesis. The sequence is that of Acyl carrier protein homolog from Ureaplasma parvum serovar 3 (strain ATCC 700970).